Here is a 283-residue protein sequence, read N- to C-terminus: Phosphate import ATP-binding protein PstB (283 aa).

Polar residues predominate over residues 1 to 20 (MAQTLAQTKQISQSHTFDVS). The tract at residues 1–32 (MAQTLAQTKQISQSHTFDVSQSHHKTPDDTNS) is disordered. The region spanning 37-278 (YSTQNLDLWY…PSNKKTEDYI (242 aa)) is the ABC transporter domain. 69-76 (GPSGCGKS) contacts ATP.

It belongs to the ABC transporter superfamily. Phosphate importer (TC 3.A.1.7) family. The complex is composed of two ATP-binding proteins (PstB), two transmembrane proteins (PstC and PstA) and a solute-binding protein (PstS).

The protein resides in the cell membrane. It catalyses the reaction phosphate(out) + ATP + H2O = ADP + 2 phosphate(in) + H(+). Functionally, part of the ABC transporter complex PstSACB involved in phosphate import. Responsible for energy coupling to the transport system. This is Phosphate import ATP-binding protein PstB from Staphylococcus aureus (strain MRSA252).